Reading from the N-terminus, the 211-residue chain is Large ribosomal subunit protein uL4 (211 aa).

Residues 46–55 show a composition bias toward polar residues; sequence GNHATKTRSM. The disordered stretch occupies residues 46–89; the sequence is GNHATKTRSMVSGGGKKPWSQKGTGRARQGSTRAPHWVGGGTVH.

Belongs to the universal ribosomal protein uL4 family. Part of the 50S ribosomal subunit.

In terms of biological role, one of the primary rRNA binding proteins, this protein initially binds near the 5'-end of the 23S rRNA. It is important during the early stages of 50S assembly. It makes multiple contacts with different domains of the 23S rRNA in the assembled 50S subunit and ribosome. Functionally, forms part of the polypeptide exit tunnel. This is Large ribosomal subunit protein uL4 from Leptospira interrogans serogroup Icterohaemorrhagiae serovar copenhageni (strain Fiocruz L1-130).